Here is a 393-residue protein sequence, read N- to C-terminus: Pre-mRNA splicing factor SR-like 1 (393 aa).

The segment at 173–393 is disordered; the sequence is MNLPTKPSGS…VIKLGGSSWR (221 aa). The span at 249-312 shows a compositional bias: basic and acidic residues; that stretch reads QSRDYYSDRD…RNDYEDDRSR (64 aa). Residues 301–308 carry the Nuclear localization signal motif; the sequence is SRRNDYED. The span at 313 to 325 shows a compositional bias: basic residues; sequence HDRRSRSRSRSRS. Basic and acidic residues-rich tracts occupy residues 329-346 and 356-385; these read QIER…KEKS and KLKD…EEVI.

It belongs to the PRP38 family. Phosphorylated. As to expression, mostly expressed in siliques and leaves, also present in seedlings, flowers and stems, and, at low levels, in roots.

The protein localises to the nucleus. Its function is as follows. May be required for pre-mRNA splicing. Confers salt tolerance to LiCl and NaCl. The polypeptide is Pre-mRNA splicing factor SR-like 1 (Arabidopsis thaliana (Mouse-ear cress)).